Reading from the N-terminus, the 605-residue chain is Insulin-like growth factor-binding protein complex acid labile subunit (605 aa).

The first 27 residues, 1-27, serve as a signal peptide directing secretion; that stretch reads MALRKGGLALALLLLSWVALGPRSLEG. The 43-residue stretch at 32–74 folds into the LRRNT domain; the sequence is TPGEAEGPACPAACVCSYDDDADELSVFCSSRNLTRLPDGVPG. Cystine bridges form between cysteine 41-cysteine 47 and cysteine 45-cysteine 60. N-linked (GlcNAc...) asparagine glycans are attached at residues asparagine 64, asparagine 85, and asparagine 96. LRR repeat units follow at residues 75 to 96, 99 to 120, 123 to 144, 147 to 168, 171 to 192, 195 to 216, 219 to 240, 243 to 264, 267 to 288, 291 to 312, 315 to 336, 339 to 360, 363 to 384, 387 to 408, 411 to 432, 435 to 456, 459 to 480, 483 to 504, and 507 to 528; these read GTQA…AFQN, SLGF…ALLG, NLCH…TFAH, ALAS…LFEG, SLWD…AFRG, SLRE…LFSG, ELRE…VFVQ, RLQK…AFLG, ALRW…TFPG, GLRV…TFKD, FLEE…SFEG, QLEV…AFLG, NVAV…VFRG, KLHS…TFTG, GLRR…SLWG, ELLE…LFQG, KLEY…ALGP, RAFW…LLAP, and RLRY…PPGL. N-linked (GlcNAc...) asparagine glycosylation occurs at asparagine 368. Asparagine 515 carries an N-linked (GlcNAc...) asparagine glycan. In terms of domain architecture, LRRCT spans 536 to 605; the sequence is NPWDCGCPLK…DLSEAHFAPC (70 aa). 3 disulfides stabilise this stretch: cysteine 540-cysteine 583, cysteine 542-cysteine 605, and cysteine 566-cysteine 571. N-linked (GlcNAc...) asparagine glycosylation occurs at asparagine 580.

Forms a ternary complex with IGF1 and IGFBP3. Plasma.

It localises to the secreted. Its subcellular location is the extracellular space. Functionally, involved in protein-protein interactions that result in protein complexes, receptor-ligand binding or cell adhesion. The polypeptide is Insulin-like growth factor-binding protein complex acid labile subunit (IGFALS) (Homo sapiens (Human)).